Here is a 385-residue protein sequence, read N- to C-terminus: Tuliposide A-converting enzyme 1, chloroplastic (385 aa).

The N-terminal 77 residues, 1–77, are a transit peptide targeting the chloroplast; the sequence is MSVASFFSSL…PSPSLSPTPT (77 aa). The active-site Acyl-ester intermediate is S235. Residues D327 and H359 each act as charge relay system in the active site.

The protein belongs to the AB hydrolase superfamily. As to quaternary structure, homodimer. As to expression, expressed in roots, stems, leaves, petals, stamens and pistils, but not in bulb scales.

The protein resides in the plastid. It localises to the chloroplast. It catalyses the reaction 6-tuliposide A = tulipalin A + D-glucose. Inhibited by NaF, AgNO(3), HgCl(2), CuSO(4) and phenylmethylsulfonyl fluoride (PMSF). Its function is as follows. Lactone-forming carboxylesterases, specifically catalyzing intramolecular transesterification, but not hydrolysis. Involved in the biosynthesis of tulipalins, defensive chemicals that show antimicrobial activities against a broad range of strains of bacteria and fungi. Substrates are 6-tuliposide A &gt; 6-tuliposide B. In Tulipa gesneriana (Garden tulip), this protein is Tuliposide A-converting enzyme 1, chloroplastic (TCEA1).